The following is a 236-amino-acid chain: Ribonuclease HII (236 aa).

Positions 27–219 constitute an RNase H type-2 domain; sequence RILCGVDEAG…VRRALDGAPP (193 aa). Positions 33, 34, and 128 each coordinate a divalent metal cation. The disordered stretch occupies residues 212-236; that stretch reads RALDGAPPPAGDAVPQTDAKTAWAD.

Belongs to the RNase HII family. Requires Mn(2+) as cofactor. The cofactor is Mg(2+).

It is found in the cytoplasm. It carries out the reaction Endonucleolytic cleavage to 5'-phosphomonoester.. In terms of biological role, endonuclease that specifically degrades the RNA of RNA-DNA hybrids. This Ralstonia nicotianae (strain ATCC BAA-1114 / GMI1000) (Ralstonia solanacearum) protein is Ribonuclease HII.